Here is a 95-residue protein sequence, read N- to C-terminus: Aspartyl/glutamyl-tRNA(Asn/Gln) amidotransferase subunit C (95 aa).

This sequence belongs to the GatC family. In terms of assembly, heterotrimer of A, B and C subunits.

The enzyme catalyses L-glutamyl-tRNA(Gln) + L-glutamine + ATP + H2O = L-glutaminyl-tRNA(Gln) + L-glutamate + ADP + phosphate + H(+). It carries out the reaction L-aspartyl-tRNA(Asn) + L-glutamine + ATP + H2O = L-asparaginyl-tRNA(Asn) + L-glutamate + ADP + phosphate + 2 H(+). Its function is as follows. Allows the formation of correctly charged Asn-tRNA(Asn) or Gln-tRNA(Gln) through the transamidation of misacylated Asp-tRNA(Asn) or Glu-tRNA(Gln) in organisms which lack either or both of asparaginyl-tRNA or glutaminyl-tRNA synthetases. The reaction takes place in the presence of glutamine and ATP through an activated phospho-Asp-tRNA(Asn) or phospho-Glu-tRNA(Gln). This chain is Aspartyl/glutamyl-tRNA(Asn/Gln) amidotransferase subunit C, found in Chlorobium limicola (strain DSM 245 / NBRC 103803 / 6330).